We begin with the raw amino-acid sequence, 361 residues long: DNA replication and repair protein RecF (361 aa).

30–37 contacts ATP; that stretch reads GDNAQGKT.

It belongs to the RecF family.

Its subcellular location is the cytoplasm. Its function is as follows. The RecF protein is involved in DNA metabolism; it is required for DNA replication and normal SOS inducibility. RecF binds preferentially to single-stranded, linear DNA. It also seems to bind ATP. This Clostridium botulinum (strain Alaska E43 / Type E3) protein is DNA replication and repair protein RecF.